The sequence spans 128 residues: Large ribosomal subunit protein bL12 (128 aa).

The protein belongs to the bacterial ribosomal protein bL12 family. As to quaternary structure, homodimer. Part of the ribosomal stalk of the 50S ribosomal subunit. Forms a multimeric L10(L12)X complex, where L10 forms an elongated spine to which 2 to 4 L12 dimers bind in a sequential fashion. Binds GTP-bound translation factors.

Forms part of the ribosomal stalk which helps the ribosome interact with GTP-bound translation factors. Is thus essential for accurate translation. This Kineococcus radiotolerans (strain ATCC BAA-149 / DSM 14245 / SRS30216) protein is Large ribosomal subunit protein bL12.